The following is a 189-amino-acid chain: Small ribosomal subunit protein uS5 (189 aa).

The 64-residue stretch at 23 to 86 (FIDKLVHINR…ESAKREMIYV (64 aa)) folds into the S5 DRBM domain.

The protein belongs to the universal ribosomal protein uS5 family. Part of the 30S ribosomal subunit. Contacts proteins S4 and S8.

Functionally, with S4 and S12 plays an important role in translational accuracy. In terms of biological role, located at the back of the 30S subunit body where it stabilizes the conformation of the head with respect to the body. The sequence is that of Small ribosomal subunit protein uS5 from Bartonella bacilliformis (strain ATCC 35685 / KC583 / Herrer 020/F12,63).